The primary structure comprises 482 residues: Zinc finger CCCH domain-containing protein 40 (482 aa).

A C3H1-type zinc finger spans residues 157 to 184 (RNRAHVCSFYVRGECTRGAECPYRHEMP). Positions 228-301 (RTLYIGGLNN…IRLKLMWGKP (74 aa)) constitute an RRM domain. Composition is skewed to low complexity over residues 329–347 (SQQQ…GQQQ) and 389–428 (PGPQ…YGGY). The segment at 329–482 (SQQQSGDQPQ…VPPPQQTTQN (154 aa)) is disordered. Over residues 429–446 (MPPPRMPYPPPPQYPPYQ) the composition is skewed to pro residues. Positions 452–466 (PAQSQASSSQQPAPA) are enriched in low complexity. Positions 473 to 482 (VPPPQQTTQN) are enriched in pro residues.

The chain is Zinc finger CCCH domain-containing protein 40 from Oryza sativa subsp. japonica (Rice).